Consider the following 446-residue polypeptide: MARDEIVDDVDVNMEEDDAEAEQRLINEEYKIWKKNSPFLYDMMLSTALEWPTLTTQWFPDVKNPKDKSHTVHRLLLGTHTAEGKPNYLQIAEVEIPKMVELNPRDYDEERGEIGGYGSKASSGEPLCIRFKITQKIDHPGEVNKARYQPQNPDIIATLAVDGRVLIFDRTKHSITPSGTPSPQLELIGHKEEGFGLNWNPHEEGCLVTGSEDKTVLLWDLKTYEGTSKQLKYSRKYTHHSHIVNDVQHHPLVKSWIGTVSDDLTLQIIDVRRPETDKAAIVARNGHSDAINALAFNPRVETIIATASADKTIGIWDMRNMKSKVHTLEGHQDAVTSLEWHPTESAILGSGSYDRRLLFWDISRVGDEQTQDDAEDGPPELLFMHGGHTNHLADFSWNRNDPWLVCSAAEDNLLQIWKVANSIVSKEPADMSTPELDDPKPKQSSH.

WD repeat units lie at residues 138–178, 189–229, 231–270, 286–326, and 330–370; these read DHPG…ITPS, GHKE…GTSK, LKYS…QIID, GHSD…SKVH, and GHQD…DEQT. The interaction with the histone H4 N-terminus stretch occupies residues 372–376; it reads DDAED. One copy of the WD 6 repeat lies at 387–427; that stretch reads GHTNHLADFSWNRNDPWLVCSAAEDNLLQIWKVANSIVSKE. Residues 427–446 are disordered; that stretch reads EPADMSTPELDDPKPKQSSH. Over residues 437 to 446 the composition is skewed to basic and acidic residues; sequence DDPKPKQSSH.

Belongs to the WD repeat RBAP46/RBAP48/MSI1 family. In terms of assembly, component of the HAT-B complex composed of at least hat-1 and hat-2. The HAT-B complex binds to histone H4 tail.

It localises to the cytoplasm. The protein localises to the nucleus. In terms of biological role, regulatory subunit of the histone acetylase B (HAT-B) complex. The complex acetylates 'Lys-12' of histone H4 which is required for telomeric silencing. In Neurospora crassa (strain ATCC 24698 / 74-OR23-1A / CBS 708.71 / DSM 1257 / FGSC 987), this protein is Histone acetyltransferase type B subunit 2 (hat-2).